A 310-amino-acid polypeptide reads, in one-letter code: Protein-methionine-sulfoxide reductase catalytic subunit MsrP (310 aa).

The segment at residues 1 to 45 (MRKTSSPRIAPSEITPRDLYHDRRRFMQAAAGAAAAALWPHWLSA) is a signal peptide (tat-type signal). Mo-molybdopterin is bound by residues asparagine 73, 76–77 (YE), cysteine 131, threonine 166, asparagine 214, arginine 219, and 230–232 (SAK).

This sequence belongs to the MsrP family. In terms of assembly, heterodimer of a catalytic subunit (MsrP) and a heme-binding subunit (MsrQ). The cofactor is Mo-molybdopterin. Predicted to be exported by the Tat system. The position of the signal peptide cleavage has not been experimentally proven.

The protein localises to the periplasm. The enzyme catalyses L-methionyl-[protein] + a quinone + H2O = L-methionyl-(S)-S-oxide-[protein] + a quinol. It carries out the reaction L-methionyl-[protein] + a quinone + H2O = L-methionyl-(R)-S-oxide-[protein] + a quinol. Its function is as follows. Part of the MsrPQ system that repairs oxidized periplasmic proteins containing methionine sulfoxide residues (Met-O), using respiratory chain electrons. Thus protects these proteins from oxidative-stress damage caused by reactive species of oxygen and chlorine generated by the host defense mechanisms. MsrPQ is essential for the maintenance of envelope integrity under bleach stress, rescuing a wide series of structurally unrelated periplasmic proteins from methionine oxidation. The catalytic subunit MsrP is non-stereospecific, being able to reduce both (R-) and (S-) diastereoisomers of methionine sulfoxide. The chain is Protein-methionine-sulfoxide reductase catalytic subunit MsrP from Methylococcus capsulatus (strain ATCC 33009 / NCIMB 11132 / Bath).